Here is a 138-residue protein sequence, read N- to C-terminus: Cysteine desulfuration protein SufE (138 aa).

Cys-51 acts as the Cysteine persulfide intermediate in catalysis.

The protein belongs to the SufE family. As to quaternary structure, homodimer. Interacts with SufS.

The protein resides in the cytoplasm. It participates in cofactor biosynthesis; iron-sulfur cluster biosynthesis. In terms of biological role, participates in cysteine desulfuration mediated by SufS. Cysteine desulfuration mobilizes sulfur from L-cysteine to yield L-alanine and constitutes an essential step in sulfur metabolism for biosynthesis of a variety of sulfur-containing biomolecules. Functions as a sulfur acceptor for SufS, by mediating the direct transfer of the sulfur atom from the S-sulfanylcysteine of SufS, an intermediate product of cysteine desulfuration process. This chain is Cysteine desulfuration protein SufE, found in Escherichia fergusonii (strain ATCC 35469 / DSM 13698 / CCUG 18766 / IAM 14443 / JCM 21226 / LMG 7866 / NBRC 102419 / NCTC 12128 / CDC 0568-73).